A 564-amino-acid polypeptide reads, in one-letter code: MIKTTIIASIKDLIKDAVKDKFKITIDLNDFVVDKAKSIEFGDFYSNVAMILASKLKKNPILIAEEICEYLKNHKTNLFESTEAVKPGYINVFLSNSVKSDLFKQINKDKDTYGIFEPKKVAYNIEFVSANPTGSLHIGHARNAALGQTLGNVWKAYGYTIEQEYYINDGGNQINNLGMSVFYRYLQKCGKDVQMEEDFYQGSEPIAVAELIYKEHKDKFVNVKYSATKIEDEKVFDFFRDFSKTELMNIIKKDLKDFSVHFDRYFPESKIYEMKLVDPTIKKLGKYVYEKDGALWLKTTEFGDDKDRVIVKSDKSFTYFMPDIAYHDIKATRTINGLKTDKIFNIWGADHASYVDRMTVALQCLGFKKDIMHVIVMQMVKLTKNGKEFKMSKRSGNSLTLRDLINAIGVDNSRWELISQAAESHIEIDVEKFTSADSTSNLSYVLYAYSRIQKILEKNESLLKESKSYNTDLLTNLKEKDMIAMLFYYPQTIANIAKSYEVHKIPIFLYTLANLLHSYYSEVKIIDESNKELLIQRLHLLQCVNQVIKNGLKLLDIEAKVLNK.

The 'HIGH' region signature appears at 130–140 (ANPTGSLHIGH).

The protein belongs to the class-I aminoacyl-tRNA synthetase family. In terms of assembly, monomer.

Its subcellular location is the cytoplasm. The catalysed reaction is tRNA(Arg) + L-arginine + ATP = L-arginyl-tRNA(Arg) + AMP + diphosphate. This is Arginine--tRNA ligase from Malacoplasma penetrans (strain HF-2) (Mycoplasma penetrans).